Consider the following 198-residue polypeptide: MVLECGVDETGRGSCISGIYASACILDPAHPIEGLRDSKKLSARKREILAEEIKQYALSWCIAQASLEEVEQLNVHHATLLAMKRAIEGLSIRANKVYVDGIHLPEVDIPAEAIVKGDDLIPAISAASILAKVARDGAMLEYHEKYPQYGFNSHKGYLTKAHREALKKYGPSPIHRKTYAPIRELLVGKDNEQIEMFE.

An RNase H type-2 domain is found at 2 to 191 (VLECGVDETG…IRELLVGKDN (190 aa)). 3 residues coordinate a divalent metal cation: Asp8, Glu9, and Asp100.

It belongs to the RNase HII family. It depends on Mn(2+) as a cofactor. Mg(2+) serves as cofactor.

The protein localises to the cytoplasm. It catalyses the reaction Endonucleolytic cleavage to 5'-phosphomonoester.. Functionally, endonuclease that specifically degrades the RNA of RNA-DNA hybrids. The chain is Ribonuclease HII from Desulforamulus reducens (strain ATCC BAA-1160 / DSM 100696 / MI-1) (Desulfotomaculum reducens).